A 241-amino-acid chain; its full sequence is Sugar fermentation stimulation protein homolog (241 aa).

The protein belongs to the SfsA family.

This is Sugar fermentation stimulation protein homolog from Thermosynechococcus vestitus (strain NIES-2133 / IAM M-273 / BP-1).